A 581-amino-acid chain; its full sequence is MITRLSHLFLRTLRDDPADAEVPSHKLLVRAGYVRRIAPGVYSWLPLGLRVLREVERVVREEMNGIGAQEISLPALLPREPYEASNRWTEYGDGLFRLKDRKGGDYLLGPTHEELFALTVKGEYNSYKDFPVTLYQVQTKYRDEERPRAGILRGREFVMKDSYSFDLTDEGLTASYRAHRDAYERIFSRLGVKYVIVSATSGAMGGSASEEFLAESEIGEDTYVRCLESGYAANVEAVKTLAPEAVPFDGLPAAKVHDTPDTPTIATLVDWANGADLGWTVTAADTLKNILVKTRQPGGKWELLGIGVPGDREVDDKRLGASLEPAEFELLTEADFAANPFLVKGYIGPKALQANGVRYLVDPRIVDGTSWITGADEPGKHVVGLVAGRDFTPDGTIEAAEVRDGDPSPDGAGALVAARGIEIGHVFQLGRKYTDVFSVDVLGENGKPVRPTMGSYGVGVSRLVAVIAEQHHDEKGLRWPAEVSPADVHVVIANKDETAREGAEGLAAELDKAGLEVILDDRKASPGVKFKDSELLGVPLVVVVGRGWGEGKVEVRDRFTGESREVAAESALSEIVKAVRG.

It belongs to the class-II aminoacyl-tRNA synthetase family. ProS type 1 subfamily. Homodimer.

Its subcellular location is the cytoplasm. It carries out the reaction tRNA(Pro) + L-proline + ATP = L-prolyl-tRNA(Pro) + AMP + diphosphate. Catalyzes the attachment of proline to tRNA(Pro) in a two-step reaction: proline is first activated by ATP to form Pro-AMP and then transferred to the acceptor end of tRNA(Pro). As ProRS can inadvertently accommodate and process non-cognate amino acids such as alanine and cysteine, to avoid such errors it has two additional distinct editing activities against alanine. One activity is designated as 'pretransfer' editing and involves the tRNA(Pro)-independent hydrolysis of activated Ala-AMP. The other activity is designated 'posttransfer' editing and involves deacylation of mischarged Ala-tRNA(Pro). The misacylated Cys-tRNA(Pro) is not edited by ProRS. The protein is Proline--tRNA ligase 1 of Rhodococcus jostii (strain RHA1).